Here is a 1091-residue protein sequence, read N- to C-terminus: Rho GTPase-activating protein 7 (1091 aa).

Positions 11–78 (LTQIEAKEAC…LNKCAVMKLE (68 aa)) constitute an SAM domain. A phosphoserine mark is found at Ser86, Ser89, and Ser129. Disordered stretches follow at residues 120-181 (SPKQ…TTPR), 296-329 (RSVSNSTQTSSSSSQSETSSAVSTPSPVTRTRSL), 402-439 (RTGSFHGPGHLSLRRENSSDSPKELKRRNSSSSVSSRM), and 491-552 (SDEG…SGVG). Residues 130 to 143 (PDNSRLQSATSRES) are compositionally biased toward polar residues. 2 stretches are compositionally biased toward low complexity: residues 155 to 166 (SSIRSLSSTSSS) and 298 to 324 (VSNSTQTSSSSSQSETSSAVSTPSPVT). A focal adhesion-targeting (FAT) region spans residues 274 to 447 (QLNCVEISAL…RMSIYDNVPG (174 aa)). Residue Ser321 is modified to Phosphoserine. Positions 414–425 (LRRENSSDSPKE) are enriched in basic and acidic residues. A compositionally biased stretch (polar residues) spans 499–511 (ALDSVSPCPSSPK). Residues 513-525 (IHLDVDHDRRTPS) show a composition bias toward basic and acidic residues. A compositionally biased stretch (polar residues) spans 526 to 535 (DLDSTGNSLN). Residues 614 to 636 (KHGFSWAVPKFMKRIKVPDYKDR) form a polybasic cluster (PBR) region. In terms of domain architecture, Rho-GAP spans 641 to 847 (VPLTVNVQRS…HMIAECKKLF (207 aa)). An START domain is found at 877–1084 (SNDQPADYRH…RDSFSNQSTE (208 aa)).

Interacts with EF1A1, facilitates EF1A1 distribution to the membrane periphery and ruffles upon growth factor stimulation and suppresses cell migration. Interacts with tensin TNS1 (via N-terminus); the interaction is decreased by phosphorylation of TNS1. Interacts with TNS3 and PTEN; in resting cells, interacts with TNS3 (via C2 tensin-type domain) but, following growth factor stimulation, TNS3 and PTEN are phosphorylated which leads to weakened interaction with TNS3 and enhanced interaction with PTEN. Interacts (via C-terminus) with tensin TNS4 (via SH2 domain); the interaction is independent of tyrosine phosphorylation of DLC1.

The protein resides in the cytoplasm. It is found in the cell junction. Its subcellular location is the focal adhesion. The protein localises to the membrane. Functions as a GTPase-activating protein for the small GTPases RHOA, RHOB, RHOC and CDC42, terminating their downstream signaling. This induces morphological changes and detachment through cytoskeletal reorganization, playing a critical role in biological processes such as cell migration and proliferation. Also functions in vivo as an activator of the phospholipase PLCD1. Active DLC1 increases cell migration velocity but reduces directionality. Required for growth factor-induced epithelial cell migration; in resting cells, interacts with TNS3 while PTEN interacts with the p85 regulatory subunit of the PI3K kinase complex but growth factor stimulation induces phosphorylation of TNS3 and PTEN, causing them to change their binding preference so that PTEN interacts with DLC1 and TNS3 interacts with p85. The PTEN-DLC1 complex translocates to the posterior of migrating cells to activate RHOA while the TNS3-p85 complex translocates to the leading edge of migrating cells to promote RAC1 activation. The protein is Rho GTPase-activating protein 7 (Dlc1) of Rattus norvegicus (Rat).